The sequence spans 443 residues: BBSome complex member BBS5 homolog (443 aa).

It belongs to the BBS5 family.

The protein localises to the cytoplasm. It is found in the cytoskeleton. Its subcellular location is the flagellum axoneme. The protein is BBSome complex member BBS5 homolog of Giardia intestinalis (strain ATCC 50803 / WB clone C6) (Giardia lamblia).